A 201-amino-acid polypeptide reads, in one-letter code: Pyrrolidone-carboxylate peptidase (201 aa).

Active-site residues include glutamate 78, cysteine 141, and histidine 165.

This sequence belongs to the peptidase C15 family. In terms of assembly, homotetramer.

It localises to the cytoplasm. The catalysed reaction is Release of an N-terminal pyroglutamyl group from a polypeptide, the second amino acid generally not being Pro.. Its function is as follows. Removes 5-oxoproline from various penultimate amino acid residues except L-proline. This chain is Pyrrolidone-carboxylate peptidase, found in Brachyspira hyodysenteriae (strain ATCC 49526 / WA1).